The sequence spans 123 residues: MNAVTESAATTTEMPAPFVFTDAAADKVKQLIDEEGNPDLKLRVFVQGGGCSGFQYGFTFDEEVNEDDTVMNKNGVQLLIDSMSYQYLVGAEIDYKDDLNGAQFVIKNPNATTTCGCGSSFSV.

The iron-sulfur cluster site is built by Cys51, Cys115, and Cys117.

This sequence belongs to the HesB/IscA family. Homodimer. It depends on iron-sulfur cluster as a cofactor.

Functionally, required for insertion of 4Fe-4S clusters. The protein is Putative iron-sulfur cluster insertion protein ErpA of Burkholderia multivorans (strain ATCC 17616 / 249).